A 181-amino-acid chain; its full sequence is Macro domain-containing protein in sno 5'region (181 aa).

Residues 1–172 (MTTITLVQGD…TFARELGDAG (172 aa)) enclose the Macro domain.

It belongs to the MacroD-type family.

The sequence is that of Macro domain-containing protein in sno 5'region from Streptomyces nogalater.